The primary structure comprises 259 residues: NAD kinase (259 aa).

The active-site Proton acceptor is D49. NAD(+)-binding positions include 49-50 (DG), R54, 118-119 (NE), D148, A156, 159-164 (TAYNYS), and A183.

The protein belongs to the NAD kinase family. A divalent metal cation is required as a cofactor.

The protein localises to the cytoplasm. The catalysed reaction is NAD(+) + ATP = ADP + NADP(+) + H(+). Its function is as follows. Involved in the regulation of the intracellular balance of NAD and NADP, and is a key enzyme in the biosynthesis of NADP. Catalyzes specifically the phosphorylation on 2'-hydroxyl of the adenosine moiety of NAD to yield NADP. The chain is NAD kinase from Xylella fastidiosa (strain Temecula1 / ATCC 700964).